The chain runs to 447 residues: Clusterin (447 aa).

Residues 1-22 (MKTLLLCVGLLLSWERGQVLGD) form the signal peptide. Residues 77–80 (KKNK) carry the Nuclear localization signal motif. N-linked (GlcNAc...) asparagine glycans are attached at residues N85 and N102. 5 cysteine pairs are disulfide-bonded: C101–C311, C112–C303, C115–C300, C120–C293, and C128–C283. S132 carries the phosphoserine modification. 5 N-linked (GlcNAc...) asparagine glycosylation sites follow: N144, N289, N326, N352, and N372. The residue at position 394 (S394) is a Phosphoserine. The Nuclear localization signal motif lies at 441 to 445 (RKKKR).

Belongs to the clusterin family. As to quaternary structure, antiparallel disulfide-linked heterodimer of an alpha chain and a beta chain. Self-associates and forms higher oligomers. Interacts with a broad range of misfolded proteins, including APP, APOC2 and LYZ. Slightly acidic pH promotes interaction with misfolded proteins. Forms high-molecular weight oligomers upon interaction with misfolded proteins. Interacts with APOA1, LRP2, CLUAP1 and PON1. Interacts with the complement membrane attack complex. Interacts (via alpha chain) with XRCC6. Interacts with SYVN1, COMMD1, BTRC, CUL1 and with ubiquitin and SCF (SKP1-CUL1-F-box protein) E3 ubiquitin-protein ligase complexes. Interacts (via alpha chain) with BAX in stressed cells, where BAX undergoes a conformation change leading to association with the mitochondrial membrane. Does not interact with BAX in unstressed cells. Found in a complex with LTF, CLU, EPPIN and SEMG1. Interacts (immaturely glycosylated pre-secreted form) with HSPA5; this interaction promotes CLU stability and facilitates stress-induced CLU retrotranslocation from the secretory pathway to the mitochondria, thereby reducing stress-induced apoptosis by stabilizing mitochondrial membrane integrity. Interacts with BCL2L1; this interaction releases and activates BAX and promotes cell death. Interacts with TGFBR2 and ACVR1. Interacts (secreted form) with STMN3; this interaction may act as an important modulator during neuronal differentiation. Interacts with VLDLR and LRP8. Post-translationally, proteolytically cleaved on its way through the secretory system, probably within the Golgi lumen. Proteolytic cleavage is not necessary for its chaperone activity. All non-secreted forms are not proteolytically cleaved. Chaperone activity of uncleaved forms is dependent on a non-reducing environment. In terms of processing, polyubiquitinated, leading to proteasomal degradation. Under cellular stress, the intracellular level of cleaved form is reduced due to proteasomal degradation. Heavily N-glycosylated. About 30% of the protein mass is comprised of complex N-linked carbohydrate. Endoplasmic reticulum (ER) stress induces changes in glycosylation status and increases level of hypoglycosylated forms. Core carbohydrates are essential for chaperone activity. Non-secreted forms are hypoglycosylated or unglycosylated.

The protein localises to the secreted. Its subcellular location is the nucleus. The protein resides in the cytoplasm. It localises to the mitochondrion membrane. It is found in the cytosol. The protein localises to the microsome. Its subcellular location is the endoplasmic reticulum. The protein resides in the mitochondrion. It localises to the perinuclear region. It is found in the cytoplasmic vesicle. The protein localises to the secretory vesicle. Its subcellular location is the chromaffin granule. Functionally, functions as extracellular chaperone that prevents aggregation of non native proteins. Prevents stress-induced aggregation of blood plasma proteins. Inhibits formation of amyloid fibrils by APP, APOC2, B2M, CALCA, CSN3, SNCA and aggregation-prone LYZ variants (in vitro). Does not require ATP. Maintains partially unfolded proteins in a state appropriate for subsequent refolding by other chaperones, such as HSPA8/HSC70. Does not refold proteins by itself. Binding to cell surface receptors triggers internalization of the chaperone-client complex and subsequent lysosomal or proteasomal degradation. When secreted, protects cells against apoptosis and against cytolysis by complement: inhibits assembly of the complement membrane attack complex (MAC) by preventing polymerization of C9 pore component of the MAC complex. Intracellular forms interact with ubiquitin and SCF (SKP1-CUL1-F-box protein) E3 ubiquitin-protein ligase complexes and promote the ubiquitination and subsequent proteasomal degradation of target proteins. Promotes proteasomal degradation of COMMD1 and IKBKB. Modulates NF-kappa-B transcriptional activity. Following stress, promotes apoptosis. Inhibits apoptosis when associated with the mitochondrial membrane by interference with BAX-dependent release of cytochrome c into the cytoplasm. Plays a role in the regulation of cell proliferation. An intracellular form suppresses stress-induced apoptosis by stabilizing mitochondrial membrane integrity through interaction with HSPA5. Secreted form does not affect caspase or BAX-mediated intrinsic apoptosis and TNF-induced NF-kappa-B-activity. Secreted form act as an important modulator during neuronal differentiation through interaction with STMN3. Plays a role in the clearance of immune complexes that arise during cell injury. The sequence is that of Clusterin (CLU) from Oryctolagus cuniculus (Rabbit).